A 965-amino-acid polypeptide reads, in one-letter code: Glycine dehydrogenase (decarboxylating) (965 aa).

Lysine 711 is modified (N6-(pyridoxal phosphate)lysine).

Belongs to the GcvP family. As to quaternary structure, the glycine cleavage system is composed of four proteins: P, T, L and H. It depends on pyridoxal 5'-phosphate as a cofactor.

The enzyme catalyses N(6)-[(R)-lipoyl]-L-lysyl-[glycine-cleavage complex H protein] + glycine + H(+) = N(6)-[(R)-S(8)-aminomethyldihydrolipoyl]-L-lysyl-[glycine-cleavage complex H protein] + CO2. In terms of biological role, the glycine cleavage system catalyzes the degradation of glycine. The P protein binds the alpha-amino group of glycine through its pyridoxal phosphate cofactor; CO(2) is released and the remaining methylamine moiety is then transferred to the lipoamide cofactor of the H protein. The protein is Glycine dehydrogenase (decarboxylating) of Psychrobacter arcticus (strain DSM 17307 / VKM B-2377 / 273-4).